We begin with the raw amino-acid sequence, 554 residues long: Glucose-6-phosphate isomerase (554 aa).

Glu359 acts as the Proton donor in catalysis. Residues His390 and Lys518 contribute to the active site.

This sequence belongs to the GPI family.

It is found in the cytoplasm. The catalysed reaction is alpha-D-glucose 6-phosphate = beta-D-fructose 6-phosphate. It participates in carbohydrate biosynthesis; gluconeogenesis. Its pathway is carbohydrate degradation; glycolysis; D-glyceraldehyde 3-phosphate and glycerone phosphate from D-glucose: step 2/4. Functionally, catalyzes the reversible isomerization of glucose-6-phosphate to fructose-6-phosphate. This Stutzerimonas stutzeri (strain A1501) (Pseudomonas stutzeri) protein is Glucose-6-phosphate isomerase.